Here is a 249-residue protein sequence, read N- to C-terminus: MRILISNDDGVNAPGLVALHAALADYAECVVIAPDQDKSGASSSLTLDRPLHPHTLANGFISLNGTPTDCVHLGIHGLLENQPDMVVSGINLGANLGDDVLYSGTVAAALEGRFLQRPSFAFSFLSRQPDNLATAAHYARLLVEAHEQLDLPPRTVLNVNIPNLPLEHIRGIQLTRLGHRARAAAPVKVVDPRGRAGYWIAAAGDVEDGGAGTDFHAVIQGYVSITPLQLDRTYQDGFSSLNTWLEGLR.

The a divalent metal cation site is built by Asp-8, Asp-9, Ser-39, and Asn-91.

This sequence belongs to the SurE nucleotidase family. Requires a divalent metal cation as cofactor.

The protein localises to the cytoplasm. It catalyses the reaction a ribonucleoside 5'-phosphate + H2O = a ribonucleoside + phosphate. Its function is as follows. Nucleotidase that shows phosphatase activity on nucleoside 5'-monophosphates. This is 5'-nucleotidase SurE from Pseudomonas savastanoi pv. phaseolicola (strain 1448A / Race 6) (Pseudomonas syringae pv. phaseolicola (strain 1448A / Race 6)).